The primary structure comprises 151 residues: Pseudo histidine-containing phosphotransfer protein 2 (151 aa).

The 96-residue stretch at 38 to 133 (SPNFVEEVAA…ATLKQKLESY (96 aa)) folds into the HPt domain.

Functions as a two-component phosphorelay mediator between cytokinin sensor histidine kinases and response regulators (B-type ARRs). Plays an important role in propagating cytokinin signal transduction. The polypeptide is Pseudo histidine-containing phosphotransfer protein 2 (Oryza sativa subsp. japonica (Rice)).